The chain runs to 480 residues: MNQDFWPFCLARLEQELPQQQFNTWIKTLQAAESDADGAVALTLTAPNRFVLQWVRERYMRRIGELGEEFHGQPIQLELQLPVAGAKSAPVAPARVRPAGANGGAAANSPMAPPVSEAAPPQIIVRPSEPEPVSANELAYDKTRLNADFTFDTLVTGRANDLARAAAMQVAQNPGTSYNPLFVYGGVGLGKTHLVHAIGNAVYRHNPRMVIRYVHVEDYYADVVRAYQQKSFDAFKRYYRSLDMLIIDDIQFFNNKNRTQEEFFHAFNALTEAKKQIVITCDTYPKDIQGLEDRLISRFDWGLTVQIEPPELEMRVAILQKKAEALRVSVDDDVAFLIAKNLRSNVRELEGALNKVVAYARFHGRGISLEVAKEALKDLLHAHNRQLSIEHIQKTVADYYKIKVADMHSKKRTRVIARPRQVAMWLAKELTPMSLPAIGEAFGGRDHTTVLHACRTITELRLGDHQLNHDVHVLTQVLRG.

The segment at 1-73 (MNQDFWPFCL…GELGEEFHGQ (73 aa)) is domain I, interacts with DnaA modulators. Residues 73–143 (QPIQLELQLP…SANELAYDKT (71 aa)) are domain II. The domain III, AAA+ region stretch occupies residues 144–360 (RLNADFTFDT…GALNKVVAYA (217 aa)). Residues G188, G190, K191, and T192 each coordinate ATP. The interval 361-480 (RFHGRGISLE…VHVLTQVLRG (120 aa)) is domain IV, binds dsDNA.

This sequence belongs to the DnaA family. In terms of assembly, oligomerizes as a right-handed, spiral filament on DNA at oriC.

It localises to the cytoplasm. Plays an essential role in the initiation and regulation of chromosomal replication. ATP-DnaA binds to the origin of replication (oriC) to initiate formation of the DNA replication initiation complex once per cell cycle. Binds the DnaA box (a 9 base pair repeat at the origin) and separates the double-stranded (ds)DNA. Forms a right-handed helical filament on oriC DNA; dsDNA binds to the exterior of the filament while single-stranded (ss)DNA is stabiized in the filament's interior. The ATP-DnaA-oriC complex binds and stabilizes one strand of the AT-rich DNA unwinding element (DUE), permitting loading of DNA polymerase. After initiation quickly degrades to an ADP-DnaA complex that is not apt for DNA replication. Binds acidic phospholipids. The polypeptide is Chromosomal replication initiator protein DnaA (Azoarcus sp. (strain BH72)).